The chain runs to 883 residues: MPILLFLLDTSASMNQRSHLGTTYLDIAKGAVETFMKLRSRDPASRGDRYMLVTVEEPPYGIKAGWKENHATFMNELKNLQAVGLTTLGQSLRTAFDLLNLNRLVTGIDNYGQGRNPFFLEPSIIIVITDGSKLTTANGVQDELHLPLYSPLPGSELTKEPFRWDQRLFALVLRLPGASLVEQEQPPAVQFDESPITAMCDVTGGRSYSVTSQRILNQCLESLVQKVQSGVVIHFEKSGPDPPILEDGLTDPVRSVGSQPWHNCHKLIYVRPNPKTGVPLGHWPIPESFWPDQNSPTLPPRTSHPVVKFSCTDSEPMIIDKLPFDKYELEPSPLTQFILERKSPHSCWPVFVANSAKYSELGHPFGYLKASTALNCVNLFVLPYNYPVFLPLLDDLFKIHKNKPSLKWRQLFENYLKTMPPYYIGPLKKALRMMGAPNLMPDSMEYGLSYSVVSYLKKLSQQAKVESDRVIGSIGKKFPQETGIKVRSGSNALSLALRKDFKQLLQEITGEVPQRPMDLNMKEFAGFQIALLNKDIKPQTFRNAYDVPRTNLLDHLTRMRVNLLRSTRQFLKGQDEDQAHSIPIVQMGNYQEFLKHIPSPLRELDYDQPRRLHTFGNPFKLDKKGMMIDEADEFVSGNQNKHKRTGEPNMQGVPKRRRCMSPLLRSRPQSPAVINNHIGGKDPPISVNQVSPDLPKPVAVHKNTDLSNNATVNEATENHVADHFCDDLLITKSEPFGTLSSAALEATEGYAAEKDSNFRPNDISDVFLENTKETGDNESCLPNNNAAFTHRKRRLQQCRSYEEANIELKAQILKEIRKPGRKYGIIFTLLKDVQGDLQTRLLFLQNVIQEAARFKKRNLIEQLEGFLEEIHRRASQVNHLSSC.

Residues 3–227 (ILLFLLDTSA…QCLESLVQKV (225 aa)) enclose the VWFA domain. The short motif at 626–633 (MMIDEADE) is the Inhibitory loop element.

This sequence belongs to the Integrator subunit 6 family. Component of the Integrator complex, composed of core subunits INTS1, INTS2, INTS3, INTS4, INTS5, INTS6, INTS7, INTS8, INTS9/RC74, INTS10, INTS11/CPSF3L, INTS12, INTS13, INTS14 and INTS15. The core complex associates with protein phosphatase 2A subunits PPP2CA and PPP2R1A, to form the Integrator-PP2A (INTAC) complex.

It is found in the nucleus. It localises to the chromosome. Component of the integrator complex, a multiprotein complex that terminates RNA polymerase II (Pol II) transcription in the promoter-proximal region of genes. The integrator complex provides a quality checkpoint during transcription elongation by driving premature transcription termination of transcripts that are unfavorably configured for transcriptional elongation: the complex terminates transcription by (1) catalyzing dephosphorylation of the C-terminal domain (CTD) of Pol II subunit POLR2A/RPB1 and SUPT5H/SPT5, (2) degrading the exiting nascent RNA transcript via endonuclease activity and (3) promoting the release of Pol II from bound DNA. The integrator complex is also involved in terminating the synthesis of non-coding Pol II transcripts, such as enhancer RNAs (eRNAs), small nuclear RNAs (snRNAs), telomerase RNAs and long non-coding RNAs (lncRNAs). Within the integrator complex, INTS6 acts as a molecular adapter that promotes assembly of protein phosphatase 2A (PP2A) subunits to the integrator core complex, promoting recruitment of PP2A to transcription pause-release checkpoint. This Xenopus laevis (African clawed frog) protein is Integrator complex subunit 6-A (ints6-a).